We begin with the raw amino-acid sequence, 599 residues long: Microtubule-associated protein 70-2 (599 aa).

The disordered stretch occupies residues 1 to 30 (MADGGGGEEGSASALRGSARRRGAVQPAGL). Positions 43 to 349 (DPVKVELNRL…ARSEAQLKEK (307 aa)) form a coiled coil. A required for targeting to microtubules region spans residues 227 to 460 (ILDRLHRQKV…HLLNRSTDAV (234 aa)). Disordered regions lie at residues 357–453 (LEDG…PHLL) and 557–599 (AMRL…RNLQ). Residues 404 to 420 (RRSPSFNSRSSLSTSSS) show a composition bias toward low complexity. A coiled-coil region spans residues 533–570 (LTKAMEVEAKKMRREVAAMEKEVAAMRLDKDQENKAKR). Residues 557 to 568 (AMRLDKDQENKA) show a composition bias toward basic and acidic residues.

This sequence belongs to the MAP70 family.

The protein localises to the cytoplasm. The protein resides in the cytoskeleton. In terms of biological role, plant-specific protein that interact with microtubules. This chain is Microtubule-associated protein 70-2 (MAP70.2), found in Oryza sativa subsp. japonica (Rice).